The chain runs to 210 residues: Small ribosomal subunit protein uS5 (210 aa).

A compositionally biased stretch (basic and acidic residues) spans M1–N23. Residues M1 to E40 are disordered. Residues F41–I104 enclose the S5 DRBM domain.

It belongs to the universal ribosomal protein uS5 family. In terms of assembly, part of the 30S ribosomal subunit. Contacts proteins S4 and S8.

With S4 and S12 plays an important role in translational accuracy. Its function is as follows. Located at the back of the 30S subunit body where it stabilizes the conformation of the head with respect to the body. The sequence is that of Small ribosomal subunit protein uS5 from Paramagnetospirillum magneticum (strain ATCC 700264 / AMB-1) (Magnetospirillum magneticum).